The sequence spans 77 residues: MNLRLCVQALLLLWLSLTAVCGGSLMPLPDGNGLEDGNVRHLVQPRGSRNGPGPWQGGRRKFRRQRPRLSHKGPMPF.

Residues 1-22 form the signal peptide; sequence MNLRLCVQALLLLWLSLTAVCG. The propeptide occupies 23–41; it reads GSLMPLPDGNGLEDGNVRH. Positions 43–77 are disordered; the sequence is VQPRGSRNGPGPWQGGRRKFRRQRPRLSHKGPMPF. A compositionally biased stretch (basic residues) spans 58–71; the sequence is GRRKFRRQRPRLSH.

The protein belongs to the apelin family. Post-translationally, several active peptides may be produced by proteolytic processing of the peptide precursor. Expressed in the brain with highest levels in the frontal cortex, thalamus, hypothalamus and midbrain. Secreted by the mammary gland into the colostrum and the milk.

The protein localises to the secreted. The protein resides in the extracellular space. Its function is as follows. Peptide hormone that functions as endogenous ligand for the G-protein-coupled apelin receptor (APLNR/APJ), that plays a role in cadiovascular homeostasis. Functions as a balanced agonist activating both G(i) protein pathway and beta-arrestin pathway of APLNR. Downstream G proteins activation, apelin can inhibit cAMP production and activate key intracellular effectors such as ERKs. On the other hand, APLNR activation induces beta-arrestin recruitment to the membrane leading to desensitization and internalization of the receptor. Apelin blunts cardiac hypertrophic induction from APLNR on response to pathological stimuli, but also induces myocardial hypertrophy under normal conditions. Apelin-36 dissociates more hardly than (pyroglu)apelin-13 from APLNR. Involved in the regulation of cardiac precursor cell movements during gastrulation and heart morphogenesis. Has an inhibitory effect on cytokine production in response to T-cell receptor/CD3 cross-linking; the oral intake of apelin in the colostrum and the milk might therefore modulate immune responses in neonates. Plays a role in early coronary blood vessels formation. Mediates myocardial contractility in an ERK1/2-dependent manner. May also have a role in the central control of body fluid homeostasis by influencing vasopressin release and drinking behavior. Functionally, (Microbial infection) Endogenous ligand for the apelin receptor (APLNR), an alternative coreceptor with CD4 for HIV-1 infection. Inhibits HIV-1 entry in cells coexpressing CD4 and APLNR. Apelin-36 has a greater inhibitory activity on HIV infection than other synthetic apelin derivatives. In Homo sapiens (Human), this protein is Apelin.